The following is a 682-amino-acid chain: Occlusion-derived virus envelope protein E66 (682 aa).

It belongs to the baculoviridae E66 family.

It localises to the virion membrane. Functionally, component of the polyhedra envelope. The protein is Occlusion-derived virus envelope protein E66 of Orgyia pseudotsugata (Douglas-fir tussock moth).